The chain runs to 602 residues: Aspartate--tRNA(Asp/Asn) ligase (602 aa).

L-aspartate is bound at residue Glu176. An aspartate region spans residues 200-203 (QQFK). L-aspartate is bound by residues Arg222 and His452. ATP is bound at residue 222–224 (RDE). Glu490 contributes to the ATP binding site. Arg497 contacts L-aspartate. 542–545 (GIDR) contacts ATP.

The protein belongs to the class-II aminoacyl-tRNA synthetase family. Type 1 subfamily. In terms of assembly, homodimer.

Its subcellular location is the cytoplasm. It catalyses the reaction tRNA(Asx) + L-aspartate + ATP = L-aspartyl-tRNA(Asx) + AMP + diphosphate. In terms of biological role, aspartyl-tRNA synthetase with relaxed tRNA specificity since it is able to aspartylate not only its cognate tRNA(Asp) but also tRNA(Asn). Reaction proceeds in two steps: L-aspartate is first activated by ATP to form Asp-AMP and then transferred to the acceptor end of tRNA(Asp/Asn). This chain is Aspartate--tRNA(Asp/Asn) ligase, found in Rickettsia canadensis (strain McKiel).